The primary structure comprises 169 residues: Peptide deformylase (169 aa).

2 residues coordinate Fe cation: cysteine 91 and histidine 133. Residue glutamate 134 is part of the active site. Fe cation is bound at residue histidine 137.

It belongs to the polypeptide deformylase family. Fe(2+) is required as a cofactor.

The catalysed reaction is N-terminal N-formyl-L-methionyl-[peptide] + H2O = N-terminal L-methionyl-[peptide] + formate. In terms of biological role, removes the formyl group from the N-terminal Met of newly synthesized proteins. Requires at least a dipeptide for an efficient rate of reaction. N-terminal L-methionine is a prerequisite for activity but the enzyme has broad specificity at other positions. The polypeptide is Peptide deformylase (Citrobacter koseri (strain ATCC BAA-895 / CDC 4225-83 / SGSC4696)).